The primary structure comprises 131 residues: uncharacterized protein (131 aa).

2 helical membrane passes run Leu-61–Ile-81 and Val-102–Tyr-122.

The protein localises to the membrane. This is an uncharacterized protein from Saccharomyces cerevisiae (strain ATCC 204508 / S288c) (Baker's yeast).